The sequence spans 154 residues: Cytochrome c-type biogenesis protein CcmE (154 aa).

Over 1-8 the chain is Cytoplasmic; the sequence is MTPQRKRR. A helical; Signal-anchor for type II membrane protein membrane pass occupies residues 9-29; the sequence is LVMLAALAGGVGVAVALALAA. Residues 30 to 154 are Periplasmic-facing; it reads LQQNINLFYS…GGTPAAEPQP (125 aa). Positions 124 and 128 each coordinate heme. A disordered region spans residues 130-154; sequence PPEAAHALKQGAATSGGTPAAEPQP.

The protein belongs to the CcmE/CycJ family.

Its subcellular location is the cell inner membrane. Its function is as follows. Heme chaperone required for the biogenesis of c-type cytochromes. Transiently binds heme delivered by CcmC and transfers the heme to apo-cytochromes in a process facilitated by CcmF and CcmH. This Bordetella petrii (strain ATCC BAA-461 / DSM 12804 / CCUG 43448) protein is Cytochrome c-type biogenesis protein CcmE.